The chain runs to 433 residues: 23S rRNA (uracil(1939)-C(5))-methyltransferase RlmD (433 aa).

The region spanning 10–68 (RTTTRQIITVSVNDLDSFGQGVARHNGKTLFIPGLLPQENAEVTVTEDKKQYARAKVVR) is the TRAM domain. Interaction with RNA regions lie at residues 23–40 (DLDS…KTLF) and 58–63 (KKQYAR). [4Fe-4S] cluster contacts are provided by C81, C87, C90, and C162. Residues Q265, F294, N299, E315, N342, and D363 each contribute to the S-adenosyl-L-methionine site. C389 (nucleophile) is an active-site residue.

Belongs to the class I-like SAM-binding methyltransferase superfamily. RNA M5U methyltransferase family. RlmD subfamily.

The catalysed reaction is uridine(1939) in 23S rRNA + S-adenosyl-L-methionine = 5-methyluridine(1939) in 23S rRNA + S-adenosyl-L-homocysteine + H(+). Functionally, catalyzes the formation of 5-methyl-uridine at position 1939 (m5U1939) in 23S rRNA. The sequence is that of 23S rRNA (uracil(1939)-C(5))-methyltransferase RlmD from Escherichia coli (strain K12).